We begin with the raw amino-acid sequence, 314 residues long: RNA 2',3'-cyclic phosphodiesterase (314 aa).

Catalysis depends on H43, which acts as the Proton donor. 2 consecutive short sequence motifs (HXTX) follow at residues 43 to 46 and 129 to 132; these read HITL and HITI. H129 acts as the Proton acceptor in catalysis.

The protein belongs to the 2H phosphoesterase superfamily. ThpR family.

It carries out the reaction a 3'-end 2',3'-cyclophospho-ribonucleotide-RNA + H2O = a 3'-end 2'-phospho-ribonucleotide-RNA + H(+). Its function is as follows. Hydrolyzes RNA 2',3'-cyclic phosphodiester to an RNA 2'-phosphomonoester. This is RNA 2',3'-cyclic phosphodiesterase from Geobacillus stearothermophilus (Bacillus stearothermophilus).